We begin with the raw amino-acid sequence, 458 residues long: Serine--tRNA ligase (458 aa).

252 to 254 (TAE) serves as a coordination point for L-serine. ATP contacts are provided by residues 283 to 285 (RKE) and Val-299. An L-serine-binding site is contributed by Glu-306. 370–373 (EMVS) is a binding site for ATP. Residue Thr-405 coordinates L-serine.

It belongs to the class-II aminoacyl-tRNA synthetase family. Type-1 seryl-tRNA synthetase subfamily. Homodimer. The tRNA molecule binds across the dimer.

The protein resides in the cytoplasm. The catalysed reaction is tRNA(Ser) + L-serine + ATP = L-seryl-tRNA(Ser) + AMP + diphosphate + H(+). The enzyme catalyses tRNA(Sec) + L-serine + ATP = L-seryl-tRNA(Sec) + AMP + diphosphate + H(+). It functions in the pathway aminoacyl-tRNA biosynthesis; selenocysteinyl-tRNA(Sec) biosynthesis; L-seryl-tRNA(Sec) from L-serine and tRNA(Sec): step 1/1. Functionally, catalyzes the attachment of serine to tRNA(Ser). Is also able to aminoacylate tRNA(Sec) with serine, to form the misacylated tRNA L-seryl-tRNA(Sec), which will be further converted into selenocysteinyl-tRNA(Sec). This chain is Serine--tRNA ligase, found in Sulfolobus acidocaldarius (strain ATCC 33909 / DSM 639 / JCM 8929 / NBRC 15157 / NCIMB 11770).